The chain runs to 276 residues: Type II pantothenate kinase (276 aa).

8-15 is a binding site for ATP; the sequence is DAGGTLTK. Glu-76 serves as the catalytic Proton acceptor. ATP is bound by residues Thr-105, 127-131, Phe-143, and Ser-230; that span reads GGTIM.

This sequence belongs to the type II pantothenate kinase family. Homodimer.

Its subcellular location is the cytoplasm. The catalysed reaction is (R)-pantothenate + ATP = (R)-4'-phosphopantothenate + ADP + H(+). Its pathway is cofactor biosynthesis; coenzyme A biosynthesis; CoA from (R)-pantothenate: step 1/5. Functionally, catalyzes the phosphorylation of pantothenate (Pan), the first step in CoA biosynthesis. This Bacillus cereus (strain ZK / E33L) protein is Type II pantothenate kinase.